We begin with the raw amino-acid sequence, 193 residues long: MKIGILALQGAFAEHAKVLDQLGVESVELRNLDDFQQDQSDLSGLILPGGESTTMGKLLRDQNMLLPIREAILSGLPVFGTCAGLILLAKEITSQKESHLGTMDMVVERNAXGRQLGSFYTEAECKGVGKIPMTFIRGPIISSVGEGVEILATVNNQIVAAQEKNMLVSSFHPELTDDVRLHQYFINMCKEKS.

Residue 50-52 (GES) coordinates L-glutamine. Catalysis depends on C82, which acts as the Nucleophile. Residues R109 and 136–137 (IR) contribute to the L-glutamine site. Catalysis depends on charge relay system residues H172 and E174.

This sequence belongs to the glutaminase PdxT/SNO family. In the presence of PdxS, forms a dodecamer of heterodimers. Only shows activity in the heterodimer.

It carries out the reaction aldehydo-D-ribose 5-phosphate + D-glyceraldehyde 3-phosphate + L-glutamine = pyridoxal 5'-phosphate + L-glutamate + phosphate + 3 H2O + H(+). The enzyme catalyses L-glutamine + H2O = L-glutamate + NH4(+). Its pathway is cofactor biosynthesis; pyridoxal 5'-phosphate biosynthesis. Catalyzes the hydrolysis of glutamine to glutamate and ammonia as part of the biosynthesis of pyridoxal 5'-phosphate. The resulting ammonia molecule is channeled to the active site of PdxS. The chain is Pyridoxal 5'-phosphate synthase subunit PdxT from Streptococcus pneumoniae serotype 19F (strain G54).